We begin with the raw amino-acid sequence, 375 residues long: Chaperone protein DnaJ (375 aa).

The 65-residue stretch at 4–68 (DYYEVLGVGK…QKRAQYDRFG (65 aa)) folds into the J domain. The CR-type zinc-finger motif lies at 129 to 211 (GKETDVEIPK…CRGSGRVKVR (83 aa)). Zn(2+) is bound by residues Cys-142, Cys-145, Cys-159, Cys-162, Cys-185, Cys-188, Cys-199, and Cys-202. CXXCXGXG motif repeat units lie at residues 142–149 (CDTCHGSG), 159–166 (CKTCSGTG), 185–192 (CTTCEGKG), and 199–206 (CSSCRGSG). Residues 349–375 (LSGEKPGQHGGEDEGFFEKMKRAFRGE) form a disordered region.

The protein belongs to the DnaJ family. Homodimer. Requires Zn(2+) as cofactor.

It localises to the cytoplasm. In terms of biological role, participates actively in the response to hyperosmotic and heat shock by preventing the aggregation of stress-denatured proteins and by disaggregating proteins, also in an autonomous, DnaK-independent fashion. Unfolded proteins bind initially to DnaJ; upon interaction with the DnaJ-bound protein, DnaK hydrolyzes its bound ATP, resulting in the formation of a stable complex. GrpE releases ADP from DnaK; ATP binding to DnaK triggers the release of the substrate protein, thus completing the reaction cycle. Several rounds of ATP-dependent interactions between DnaJ, DnaK and GrpE are required for fully efficient folding. Also involved, together with DnaK and GrpE, in the DNA replication of plasmids through activation of initiation proteins. This Brevibacillus choshinensis protein is Chaperone protein DnaJ.